The chain runs to 279 residues: Methyltransferase ausD (279 aa).

Residues 124 to 125, 152 to 153, and Arg-244 contribute to the S-adenosyl-L-methionine site; these read DL and DI.

This sequence belongs to the class I-like SAM-binding methyltransferase superfamily. Homodimer.

It participates in secondary metabolite biosynthesis; terpenoid biosynthesis. Its function is as follows. Methyltransferase; part of the gene cluster that mediates the biosynthesis of calidodehydroaustin, a fungal meroterpenoid. The first step of the pathway is the synthesis of 3,5-dimethylorsellinic acid by the polyketide synthase ausA. 3,5-dimethylorsellinic acid is then prenylated by the polyprenyl transferase ausN. Further epoxidation by the FAD-dependent monooxygenase ausM and cyclization by the probable terpene cyclase ausL lead to the formation of protoaustinoid A. Protoaustinoid A is then oxidized to spiro-lactone preaustinoid A3 by the combined action of the FAD-binding monooxygenases ausB and ausC, and the dioxygenase ausE. Acid-catalyzed keto-rearrangement and ring contraction of the tetraketide portion of preaustinoid A3 by ausJ lead to the formation of preaustinoid A4. The aldo-keto reductase ausK, with the help of ausH, is involved in the next step by transforming preaustinoid A4 into isoaustinone which is in turn hydroxylated by the P450 monooxygenase ausI to form austinolide. The cytochrome P450 monooxygenase ausG modifies austinolide to austinol. Austinol is further acetylated to austin by the O-acetyltransferase ausP, which spontaneously changes to dehydroaustin. The cytochrome P450 monooxygenase ausR then converts dehydroaustin is into 7-dehydrodehydroaustin. The hydroxylation catalyzed by ausR permits the O-acetyltransferase ausQ to add an additional acetyl group to the molecule, leading to the formation of acetoxydehydroaustin. The short chain dehydrogenase ausT catalyzes the reduction of the double bond present between carbon atoms 1 and 2 to convert 7-dehydrodehydroaustin into 1,2-dihydro-7-hydroxydehydroaustin. AusQ catalyzes not only an acetylation reaction but also the addition of the PKS ausV diketide product to 1,2-dihydro-7-hydroxydehydroaustin, forming precalidodehydroaustin. Finally, the iron/alpha-ketoglutarate-dependent dioxygenase converts precalidodehydroaustin into calidodehydroaustin. This Aspergillus calidoustus protein is Methyltransferase ausD.